We begin with the raw amino-acid sequence, 654 residues long: Hepatocyte growth factor activator serine proteases (654 aa).

Positions 1–33 are cleaved as a signal peptide; it reads MGRWAWGPSLCPLPGMALLLLLLLLLVPHGAQP. The segment at 34-100 is disordered; the sequence is QAGGNLTEPP…SSSPGDPVLT (67 aa). A propeptide spans 34–370 (removed in mature form); the sequence is QAGGNLTEPP…RLAACESLAR (337 aa). N-linked (GlcNAc...) asparagine glycosylation is found at Asn38 and Asn46. Low complexity predominate over residues 57–81; sequence PVTSVTPVTPATSAPEAQGPRGRGL. Residues 101–148 form the Fibronectin type-II domain; the sequence is VDGQPCRFPFRYGGRMLHACTSEGSAHRKWCATTHNYDRDRAWGYCVQ. Intrachain disulfides connect Cys106–Cys131, Cys120–Cys146, Cys162–Cys173, Cys167–Cys184, Cys186–Cys195, Cys200–Cys228, Cys226–Cys235, Cys243–Cys254, Cys248–Cys265, Cys267–Cys276, Cys284–Cys365, Cys305–Cys347, Cys336–Cys360, Cys393–Cys520, Cys431–Cys447, Cys439–Cys509, Cys534–Cys603, Cys566–Cys582, and Cys593–Cys621. The EGF-like 1 domain occupies 158 to 196; sequence ALDSCASSPCLNGGSCSHTQDPGSYHCTCPMAFTGRNCD. The region spanning 198 to 238 is the Fibronectin type-I domain; it reads EKCFDETRYEHLEAGDRWARVSQGQVEQCECAGGQIRCEGT. The region spanning 239-277 is the EGF-like 2 domain; sequence RHTACLSSPCLNGGTCHLIVATGTTVCSCPPGHAGRLCN. One can recognise a Kringle domain in the interval 283-365; it reads RCFVGNGTEY…SWEYCRLAAC (83 aa). The N-linked (GlcNAc...) asparagine glycan is linked to Asn288. The Peptidase S1 domain maps to 407–645; the sequence is IIGGSSSLPG…YVDWIKDRIW (239 aa). The active-site Charge relay system is His446. Asn467 and Asn491 each carry an N-linked (GlcNAc...) asparagine glycan. Asp496 acts as the Charge relay system in catalysis. N-linked (GlcNAc...) asparagine glycosylation occurs at Asn545. Ser597 functions as the Charge relay system in the catalytic mechanism.

This sequence belongs to the peptidase S1 family. As to quaternary structure, heterodimer of a short chain and a long chain linked by a disulfide bond. Post-translationally, the active form of HGFAC presents in the serum is derived from the COOH-terminal region of the precursor by the cleavage of bonds between Arg-370 and Ile-371 and Arg-406 and Ile-407. Liver.

The protein resides in the secreted. Serine protease that hydrolyzes the inactive zymogen hepatocyte growth factor (HGFsc) to an activated disulfide-linked heterodimer, then initiating hepatocyte growth factor receptor signaling pathway. In Canis lupus familiaris (Dog), this protein is Hepatocyte growth factor activator serine proteases (HGFAC).